Consider the following 85-residue polypeptide: Kunitz-type serine protease inhibitor homolog beta-bungarotoxin BF B1 chain (85 aa).

The signal sequence occupies residues 1–24 (MSSGGLLLLLGLLTLWTELTPVSS). The region spanning 31 to 81 (CDKPPDTGRCRKNVRAFYYKPSAKRCVQFIYGGCNANGNHFKSDHLCRCEC) is the BPTI/Kunitz inhibitor domain. Cystine bridges form between C31–C81, C40–C64, and C56–C77.

Belongs to the venom Kunitz-type family. In terms of assembly, heterodimer; disulfide-linked. The A chains have phospholipase A2 activity and the B chains show homology with the basic protease inhibitors. As to expression, expressed by the venom gland.

It localises to the secreted. In terms of biological role, beta-1-bungarotoxin is a presynaptic neurotoxin of the venom. The B chain is homologous to venom basic protease inhibitors but has no protease inhibitor activity and blocks voltage-gated potassium channels (Kv). In Bungarus fasciatus (Banded krait), this protein is Kunitz-type serine protease inhibitor homolog beta-bungarotoxin BF B1 chain.